The chain runs to 337 residues: Ketol-acid reductoisomerase (NADP(+)) (337 aa).

A KARI N-terminal Rossmann domain is found at 3–183; the sequence is LEMFYDDDAD…GGTRAGVIKT (181 aa). Residues 26-29, lysine 49, serine 52, serine 54, and 84-87 each bind NADP(+); these read YGSQ and DTAQ. Residue histidine 109 is part of the active site. NADP(+) is bound at residue glycine 135. A KARI C-terminal knotted domain is found at 184-329; that stretch reads TFKDETETDL…KKLRDLMSWV (146 aa). Residues aspartate 192, glutamate 196, glutamate 228, and glutamate 232 each coordinate Mg(2+). Position 253 (serine 253) interacts with substrate.

This sequence belongs to the ketol-acid reductoisomerase family. Requires Mg(2+) as cofactor.

It catalyses the reaction (2R)-2,3-dihydroxy-3-methylbutanoate + NADP(+) = (2S)-2-acetolactate + NADPH + H(+). It carries out the reaction (2R,3R)-2,3-dihydroxy-3-methylpentanoate + NADP(+) = (S)-2-ethyl-2-hydroxy-3-oxobutanoate + NADPH + H(+). The protein operates within amino-acid biosynthesis; L-isoleucine biosynthesis; L-isoleucine from 2-oxobutanoate: step 2/4. It participates in amino-acid biosynthesis; L-valine biosynthesis; L-valine from pyruvate: step 2/4. Involved in the biosynthesis of branched-chain amino acids (BCAA). Catalyzes an alkyl-migration followed by a ketol-acid reduction of (S)-2-acetolactate (S2AL) to yield (R)-2,3-dihydroxy-isovalerate. In the isomerase reaction, S2AL is rearranged via a Mg-dependent methyl migration to produce 3-hydroxy-3-methyl-2-ketobutyrate (HMKB). In the reductase reaction, this 2-ketoacid undergoes a metal-dependent reduction by NADPH to yield (R)-2,3-dihydroxy-isovalerate. This Mycobacterium bovis (strain BCG / Pasteur 1173P2) protein is Ketol-acid reductoisomerase (NADP(+)).